A 169-amino-acid chain; its full sequence is MNAHAALTLYTDGACLGNPGPGGWAFALVPSDVPFLETGQXAPEAAAFTRSGSAYPSTNNRMELCAVINALQEAHGRAAEAVVVVTDSQYVRKGITQWIHTWKHNGWKTAAKQPVKNKDLWEALSALADALSVEWRWVKGHAGDPYNELCDRLATDAARRAAQSTADCP.

An RNase H type-1 domain is found at 3–159; that stretch reads AHAALTLYTD…CDRLATDAAR (157 aa). Residues Asp-12, Glu-63, Asp-87, and Asp-151 each contribute to the Mg(2+) site.

Belongs to the RNase H family. As to quaternary structure, monomer. Mg(2+) is required as a cofactor.

It is found in the cytoplasm. It carries out the reaction Endonucleolytic cleavage to 5'-phosphomonoester.. In terms of biological role, endonuclease that specifically degrades the RNA of RNA-DNA hybrids. This Treponema pallidum subsp. pallidum (strain SS14) protein is Ribonuclease H.